The primary structure comprises 255 residues: Electron transfer flavoprotein beta subunit lysine methyltransferase (255 aa).

The transit peptide at 1 to 32 (MAFSLCWKAPRSPWSFLQAVNNGSPLFLWRTV) directs the protein to the mitochondrion.

Belongs to the methyltransferase superfamily. ETFBKMT family. Interacts with HSPD1; this protein may possibly be a methylation substrate.

The protein localises to the cytoplasm. It localises to the mitochondrion matrix. It carries out the reaction L-lysyl-[protein] + 3 S-adenosyl-L-methionine = N(6),N(6),N(6)-trimethyl-L-lysyl-[protein] + 3 S-adenosyl-L-homocysteine + 3 H(+). Protein-lysine methyltransferase that selectively trimethylates the flavoprotein ETFB in mitochondria. Thereby, may negatively regulate the function of ETFB in electron transfer from Acyl-CoA dehydrogenases. The protein is Electron transfer flavoprotein beta subunit lysine methyltransferase of Mus musculus (Mouse).